Here is a 615-residue protein sequence, read N- to C-terminus: Proteasome-associated ATPase (615 aa).

The segment at 1-27 is disordered; it reads MSESERSEASEVFGTSPDSRLSSEDAA. Residues 22–99 adopt a coiled-coil conformation; it reads SSEDAAELEQ…LREEVDRLGQ (78 aa). 302–307 is a binding site for ATP; sequence GCGKTL. Positions 614-615 are docks into pockets in the proteasome alpha-ring; sequence YL.

It belongs to the AAA ATPase family. Homohexamer. Assembles into a hexameric ring structure that caps the 20S proteasome core. Strongly interacts with the prokaryotic ubiquitin-like protein Pup through a hydrophobic interface; the interacting region of ARC lies in its N-terminal coiled-coil domain. There is one Pup binding site per ARC hexamer ring. Upon ATP-binding, the C-terminus of ARC interacts with the alpha-rings of the proteasome core, possibly by binding to the intersubunit pockets.

It participates in protein degradation; proteasomal Pup-dependent pathway. ATPase which is responsible for recognizing, binding, unfolding and translocation of pupylated proteins into the bacterial 20S proteasome core particle. May be essential for opening the gate of the 20S proteasome via an interaction with its C-terminus, thereby allowing substrate entry and access to the site of proteolysis. Thus, the C-termini of the proteasomal ATPase may function like a 'key in a lock' to induce gate opening and therefore regulate proteolysis. The sequence is that of Proteasome-associated ATPase from Mycolicibacterium vanbaalenii (strain DSM 7251 / JCM 13017 / BCRC 16820 / KCTC 9966 / NRRL B-24157 / PYR-1) (Mycobacterium vanbaalenii).